Consider the following 122-residue polypeptide: Large ribosomal subunit protein uL18 (122 aa).

It belongs to the universal ribosomal protein uL18 family. Part of the 50S ribosomal subunit; part of the 5S rRNA/L5/L18/L25 subcomplex. Contacts the 5S and 23S rRNAs.

Its function is as follows. This is one of the proteins that bind and probably mediate the attachment of the 5S RNA into the large ribosomal subunit, where it forms part of the central protuberance. The protein is Large ribosomal subunit protein uL18 of Prochlorococcus marinus (strain MIT 9515).